Here is a 398-residue protein sequence, read N- to C-terminus: Cytochrome b (398 aa).

The chain crosses the membrane as a helical span at residues 45–65 (LGSIAGIALVIQIITGVILAM). 2 residues coordinate heme b: His95 and His109. The next 8 membrane-spanning stretches (helical) occupy residues 97–117 (VGAS…LYYG), 129–149 (IGII…VLPW), 164–184 (FSAI…GFSV), 192–212 (FFSL…LHLL), 245–265 (FVGF…EPNY), 304–324 (LAGV…PWLD), 335–355 (PIYR…GYLG), and 364–384 (IIIS…VLPL). Positions 196 and 210 each coordinate heme b.

This sequence belongs to the cytochrome b family. The main subunits of complex b-c1 are: cytochrome b, cytochrome c1 and the Rieske protein. Heme b serves as cofactor.

It localises to the cell membrane. In terms of biological role, component of the ubiquinol-cytochrome c reductase complex (complex III or cytochrome b-c1 complex), which is a respiratory chain that generates an electrochemical potential coupled to ATP synthesis. The chain is Cytochrome b (petB) from Rickettsia typhi (strain ATCC VR-144 / Wilmington).